Reading from the N-terminus, the 932-residue chain is Lipoxygenase 2.2, chloroplastic (932 aa).

Residues 79–219 form the PLAT domain; sequence MKATVSVHMK…CSPDKRTFFP (141 aa). The 710-residue stretch at 223–932 folds into the Lipoxygenase domain; the sequence is SYIPSQTPKG…EMGIPNSISI (710 aa). Residues 270-284 are compositionally biased toward basic and acidic residues; sequence PESKRPVLGGKEHPY. The interval 270 to 311 is disordered; sequence PESKRPVLGGKEHPYPRRCRTGRPRSKTDPSSEEESHKKGEM. Positions 285 to 294 are enriched in basic residues; sequence PRRCRTGRPR. Positions 295 to 311 are enriched in basic and acidic residues; sequence SKTDPSSEEESHKKGEM. His588, His593, His778, Asn782, and Ile932 together coordinate Fe cation.

It belongs to the lipoxygenase family. Fe cation serves as cofactor.

It is found in the plastid. The protein localises to the chloroplast. The enzyme catalyses (9Z,12Z)-octadecadienoate + O2 = (13S)-hydroperoxy-(9Z,11E)-octadecadienoate. It carries out the reaction (9Z,12Z,15Z)-octadecatrienoate + O2 = (13S)-hydroperoxy-(9Z,11E,15Z)-octadecatrienoate. It participates in lipid metabolism; oxylipin biosynthesis. Its function is as follows. Plant lipoxygenase may be involved in a number of diverse aspects of plant physiology including growth and development, pest resistance, and senescence or responses to wounding. This enzyme exhibits linoleate 13-lipoxygenase activity. The sequence is that of Lipoxygenase 2.2, chloroplastic (LOX2.2) from Hordeum vulgare (Barley).